A 908-amino-acid chain; its full sequence is Adhesion G-protein coupled receptor F1 (908 aa).

Residues 1 to 20 (MRIGLLWLVPLFTLTEGTDG) form the signal peptide. The Extracellular portion of the chain corresponds to 21-588 (FLQQKNDGRR…VVPVVKWITY (568 aa)). N-linked (GlcNAc...) asparagine glycosylation is found at N133, N167, N328, N353, N367, N388, N422, N453, N510, N519, N526, and N551. Positions 147-255 (ERAKVWGTFE…GSFRVFGKAP (109 aa)) constitute an SEA domain. Residues 434-577 (PVTQIQSTRG…SMLMSPFVPS (144 aa)) enclose the GAIN-B domain. 2 cysteine pairs are disulfide-bonded: C532-C559 and C547-C561. Residues 532–577 (CVFWDFSQLQWSNAGCQLVNETLDTVLCRCSHLTSFSMLMSPFVPS) are GPS. Residues 566-574 (SFSMLMSPF) form a stachel region. The helical transmembrane segment at 589-609 (IGLSISIASLILCLIIESLFW) threads the bilayer. The Cytoplasmic portion of the chain corresponds to 610–622 (KQTKRSQTSYTRN). A helical membrane pass occupies residues 623–643 (ICLVNIAVSLLIADVWFIIAA). Residues 644–658 (TVDPSVSPSGVCVAA) lie on the Extracellular side of the membrane. C655 and C731 are disulfide-bonded. A helical membrane pass occupies residues 659–679 (VFFTHFFYLAVFFWMLVLGIL). At 680–697 (LAYRIILVFHHMALTTMM) the chain is on the cytoplasmic side. The chain crosses the membrane as a helical span at residues 698–718 (AIGFCLGYGCPLLISIITLAV). Residues 719–742 (TQPSNSYKRNDVCWLNWSDKSKPL) are Extracellular-facing. N734 is a glycosylation site (N-linked (GlcNAc...) asparagine). A helical transmembrane segment spans residues 743 to 763 (LAFVVPALTIVAVNLVVVLLV). The Cytoplasmic portion of the chain corresponds to 764–789 (LRKLWRPAVGERLNQDDKATAIRMGK). Residues 790 to 810 (SLLVLTPLLGLTWGFGIGTMA) traverse the membrane as a helical segment. At 811-818 (NSHNLAWH) the chain is on the extracellular side. A helical transmembrane segment spans residues 819–839 (VLFALLNAFQGFFIFCFGILL). Residues 840 to 908 (DTKLRQLLSN…ITLTQFLSTE (69 aa)) lie on the Cytoplasmic side of the membrane.

The protein belongs to the G-protein coupled receptor 2 family. Adhesion G-protein coupled receptor (ADGR) subfamily. In terms of assembly, heterodimer of 2 chains generated by proteolytic processing; the large extracellular N-terminal fragment and the membrane-bound C-terminal fragment predominantly remain associated and non-covalently linked. Post-translationally, autoproteolytically processed at the GPS region of the GAIN-B domain; this cleavage modulates receptor activity. In terms of tissue distribution, expressed in liver, kidney and adrenal gland. In kidney strong expression in the renal pelvis and the ureter.

The protein resides in the cell membrane. Forms a heterodimer of 2 chains generated by proteolytic processing that remain associated through non-covalent interactions mediated by the GAIN-B domain. In the inactivated receptor, the Stachel sequence (also named stalk) is embedded in the GAIN-B domain, where it adopts a beta-strand conformation. On activation, the Stachel moves into the 7 transmembrane region and adopts a twisted hook-shaped configuration that forms contacts within the receptor, leading to coupling of a G-alpha protein, which activates signaling. The cleaved GAIN-B and N-terminal domains can then dissociate from the rest of the receptor. In terms of biological role, adhesion G-protein coupled receptor (aGPCR) for N-docosahexaenoylethanolamine (synaptamide), an omega-3 fatty acid lipid highly enriched in the brain. Ligand binding causes a conformation change that triggers signaling via guanine nucleotide-binding proteins (G proteins) and modulates the activity of downstream effectors, such as adenylate cyclase. ADGRF1 is coupled to G(s) G proteins and mediates activation of adenylate cyclase activity. Also able to couple to G(q), G(i) and G(12)/G(13) G proteins; additional evidence is however required to confirm this result in vivo. Involved in the development of neurons and cognitive function. In liver, involved in fat accumulation. The protein is Adhesion G-protein coupled receptor F1 of Mus musculus (Mouse).